We begin with the raw amino-acid sequence, 1029 residues long: Endosome/lysosome-associated apoptosis and autophagy regulator family member 2 (1029 aa).

An N-terminal signal peptide occupies residues 1-47 (MLFRARGPVRGRGWGRPAEAPRRGRSPPWSPAWICCWALAGCQAAWA). Topologically, residues 48-929 (GDLPSSSSRP…TCETVDFWLK (882 aa)) are extracellular. Asparagine 169 carries N-linked (GlcNAc...) asparagine glycosylation. 3 cysteine pairs are disulfide-bonded: cysteine 293-cysteine 310, cysteine 323-cysteine 346, and cysteine 326-cysteine 358. 2 N-linked (GlcNAc...) asparagine glycosylation sites follow: asparagine 405 and asparagine 691. Residues 672-877 (SDCFFYHEKE…LWESAEACPL (206 aa)) form the MRH domain. Disulfide bonds link cysteine 674–cysteine 720, cysteine 730–cysteine 758, cysteine 827–cysteine 863, and cysteine 839–cysteine 875. Residues 930-950 (VGAGVGAFTAVLLVALTCYFW) form a helical membrane-spanning segment. Over 951–1029 (KKNQKLEYKY…QLKTSRSPNI (79 aa)) the chain is Cytoplasmic. Position 1018 is a phosphoserine (serine 1018).

It belongs to the ELAPOR family.

The protein localises to the cell membrane. In terms of biological role, functions as a regulator of the BMP signaling pathway and may be involved in epidermal differentiation. The protein is Endosome/lysosome-associated apoptosis and autophagy regulator family member 2 of Homo sapiens (Human).